The following is a 237-amino-acid chain: Putative N-acetylmannosamine-6-phosphate 2-epimerase (237 aa).

It belongs to the NanE family.

The enzyme catalyses an N-acyl-D-glucosamine 6-phosphate = an N-acyl-D-mannosamine 6-phosphate. Its pathway is amino-sugar metabolism; N-acetylneuraminate degradation; D-fructose 6-phosphate from N-acetylneuraminate: step 3/5. Functionally, converts N-acetylmannosamine-6-phosphate (ManNAc-6-P) to N-acetylglucosamine-6-phosphate (GlcNAc-6-P). This chain is Putative N-acetylmannosamine-6-phosphate 2-epimerase, found in Listeria monocytogenes serovar 1/2a (strain ATCC BAA-679 / EGD-e).